A 498-amino-acid chain; its full sequence is Glycerol kinase (498 aa).

Thr12 contributes to the ADP binding site. Positions 12, 13, and 14 each coordinate ATP. Residue Thr12 coordinates sn-glycerol 3-phosphate. An ADP-binding site is contributed by Arg16. Sn-glycerol 3-phosphate contacts are provided by Arg82, Glu83, Tyr134, and Asp244. Glycerol-binding residues include Arg82, Glu83, Tyr134, Asp244, and Gln245. Positions 266 and 309 each coordinate ADP. Positions 266, 309, 313, and 410 each coordinate ATP. The ADP site is built by Gly410 and Asn414.

The protein belongs to the FGGY kinase family. In terms of assembly, homotetramer and homodimer (in equilibrium).

It catalyses the reaction glycerol + ATP = sn-glycerol 3-phosphate + ADP + H(+). Its pathway is polyol metabolism; glycerol degradation via glycerol kinase pathway; sn-glycerol 3-phosphate from glycerol: step 1/1. Activated by phosphorylation and inhibited by fructose 1,6-bisphosphate (FBP). In terms of biological role, key enzyme in the regulation of glycerol uptake and metabolism. Catalyzes the phosphorylation of glycerol to yield sn-glycerol 3-phosphate. This Natranaerobius thermophilus (strain ATCC BAA-1301 / DSM 18059 / JW/NM-WN-LF) protein is Glycerol kinase.